We begin with the raw amino-acid sequence, 576 residues long: Small ribosomal subunit protein mS80 (rPPR6) (576 aa).

The N-terminal 76 residues, Met1 to Ser76, are a transit peptide targeting the mitochondrion. PPR repeat units follow at residues Asn230 to Pro264, Asn265 to Ser299, Glu300 to Pro336, Thr341 to Arg370, Gly371 to Pro405, Gly406 to Pro440, Asp441 to Leu475, Ser476 to Pro510, and Asn511 to Leu546.

This sequence belongs to the PPR family. P subfamily. In terms of assembly, component of the mitochondrial ribosome small subunit.

The protein resides in the mitochondrion. This is Small ribosomal subunit protein mS80 (rPPR6) from Arabidopsis thaliana (Mouse-ear cress).